A 145-amino-acid polypeptide reads, in one-letter code: UPF0260 protein VS_0923 (145 aa).

Belongs to the UPF0260 family.

The protein is UPF0260 protein VS_0923 of Vibrio atlanticus (strain LGP32) (Vibrio splendidus (strain Mel32)).